The sequence spans 132 residues: Sec-independent protein translocase protein TatB (132 aa).

A helical transmembrane segment spans residues 2–22 (FDGIGFMELLLIGILGLVVLG). Positions 86–132 (LKSAAQSVNRPYKVEDISPASSSAPVDPAPTETKTAETSANSEKPNG) are disordered. Residues 103–115 (SPASSSAPVDPAP) are compositionally biased toward low complexity. Over residues 117–132 (ETKTAETSANSEKPNG) the composition is skewed to polar residues.

It belongs to the TatB family. In terms of assembly, the Tat system comprises two distinct complexes: a TatABC complex, containing multiple copies of TatA, TatB and TatC subunits, and a separate TatA complex, containing only TatA subunits. Substrates initially bind to the TatABC complex, which probably triggers association of the separate TatA complex to form the active translocon.

It localises to the cell inner membrane. Its function is as follows. Part of the twin-arginine translocation (Tat) system that transports large folded proteins containing a characteristic twin-arginine motif in their signal peptide across membranes. Together with TatC, TatB is part of a receptor directly interacting with Tat signal peptides. TatB may form an oligomeric binding site that transiently accommodates folded Tat precursor proteins before their translocation. This chain is Sec-independent protein translocase protein TatB, found in Shewanella sediminis (strain HAW-EB3).